The sequence spans 206 residues: Ribosomal RNA small subunit methyltransferase G (206 aa).

S-adenosyl-L-methionine contacts are provided by residues Gly-71, Phe-76, 125 to 126 (IE), and Arg-139.

The protein belongs to the methyltransferase superfamily. RNA methyltransferase RsmG family.

It localises to the cytoplasm. The enzyme catalyses guanosine(527) in 16S rRNA + S-adenosyl-L-methionine = N(7)-methylguanosine(527) in 16S rRNA + S-adenosyl-L-homocysteine. In terms of biological role, specifically methylates the N7 position of guanine in position 527 of 16S rRNA. In Cereibacter sphaeroides (strain ATCC 17029 / ATH 2.4.9) (Rhodobacter sphaeroides), this protein is Ribosomal RNA small subunit methyltransferase G.